We begin with the raw amino-acid sequence, 720 residues long: Polyribonucleotide nucleotidyltransferase (720 aa).

Residues D487 and D493 each coordinate Mg(2+). A KH domain is found at 554–613 (PRIETFKIPTDKIREVIGTGGKVIREIVEKTGAKVNIEDDGTVKVASSDGEAMKAAIKWI). In terms of domain architecture, S1 motif spans 623–691 (GQIYDGTVVK…DRGKTRLSMK (69 aa)). The disordered stretch occupies residues 699–720 (EDLEAKDKVAEGEKAPREAAGE). Basic and acidic residues predominate over residues 701 to 720 (LEAKDKVAEGEKAPREAAGE).

The protein belongs to the polyribonucleotide nucleotidyltransferase family. The cofactor is Mg(2+).

It is found in the cytoplasm. It catalyses the reaction RNA(n+1) + phosphate = RNA(n) + a ribonucleoside 5'-diphosphate. Functionally, involved in mRNA degradation. Catalyzes the phosphorolysis of single-stranded polyribonucleotides processively in the 3'- to 5'-direction. In Bradyrhizobium diazoefficiens (strain JCM 10833 / BCRC 13528 / IAM 13628 / NBRC 14792 / USDA 110), this protein is Polyribonucleotide nucleotidyltransferase.